The primary structure comprises 998 residues: Sensor histidine kinase AruS (998 aa).

3 disordered regions span residues 27–82 (ERRP…HARA), 154–198 (RQAG…LPAG), and 224–245 (RQHP…RQPR). Over residues 40–49 (GEAAVRRAGL) the composition is skewed to low complexity. Residues 161–183 (HRLHRPRTTHRHAVRRAPGRRRE) show a composition bias toward basic residues. The next 2 helical transmembrane spans lie at 264–284 (VLLF…FFEY) and 395–415 (ASLL…SWLF). An HAMP domain is found at 417–473 (SLVTRHLWRMSEFAGHIAEGDLQQPLRLDKVDRERDEIDAVAAALEDMRQALRTDRR). Residues 513–734 (TMSHEIRTPL…TFWFEIELAL (222 aa)) enclose the Histidine kinase domain. H516 is modified (phosphohistidine; by autocatalysis). The Response regulatory domain occupies 751-869 (EVLLVEDVAL…ELRRALGEVG (119 aa)). D800 carries the 4-aspartylphosphate modification. The HPt domain occupies 894-987 (GRHKLAGLLG…RDGAEALRRA (94 aa)). H933 is subject to Phosphohistidine.

Post-translationally, autophosphorylated. Activation may require a sequential transfer of a phosphate group from a His in the primary transmitter domain, to an Asp in the receiver domain and to a His in the secondary transmitter domain.

Its subcellular location is the cell membrane. It carries out the reaction ATP + protein L-histidine = ADP + protein N-phospho-L-histidine.. The protein operates within amino-acid degradation; L-arginine degradation [regulation]. Member of the two-component regulatory system AruS/AruR, which is involved in the regulation of the arginine transaminase (ATA) pathway in response to exogeneous L-arginine. Probably functions as a sensor kinase that phosphorylates AruR. The chain is Sensor histidine kinase AruS (aruS) from Pseudomonas aeruginosa (strain ATCC 15692 / DSM 22644 / CIP 104116 / JCM 14847 / LMG 12228 / 1C / PRS 101 / PAO1).